We begin with the raw amino-acid sequence, 539 residues long: Glutathione synthetase, chloroplastic (539 aa).

A chloroplast-targeting transit peptide spans 1 to 61; that stretch reads MGSGCSSLSY…SPLRCGRSFK (61 aa). Arginine 193 contributes to the substrate binding site. Residue glutamate 209 coordinates ATP. The Mg(2+) site is built by glutamate 209 and asparagine 211. Substrate is bound by residues 213 to 216, 281 to 283, glutamine 287, and 335 to 338; these read ISCS, ERN, and RSGY. Residues lysine 374, 428–437, tyrosine 439, 464–467, and glutamate 490 contribute to the ATP site; these read KPQREGGGNN and MQRI. Glutamate 432 contacts Mg(2+). Arginine 515 contacts substrate. ATP is bound by residues lysine 517 and glutamate 523. Residue 526 to 527 participates in substrate binding; the sequence is VA.

It belongs to the eukaryotic GSH synthase family. Homodimer. Mg(2+) serves as cofactor.

It is found in the plastid. Its subcellular location is the chloroplast. The catalysed reaction is gamma-L-glutamyl-L-cysteine + glycine + ATP = glutathione + ADP + phosphate + H(+). Its pathway is sulfur metabolism; glutathione biosynthesis; glutathione from L-cysteine and L-glutamate: step 2/2. This chain is Glutathione synthetase, chloroplastic (GSH2), found in Arabidopsis thaliana (Mouse-ear cress).